Here is a 443-residue protein sequence, read N- to C-terminus: Serine--tRNA ligase (443 aa).

246–248 (TAE) contacts L-serine. An ATP-binding site is contributed by 277-279 (RAE). Position 300 (Glu300) interacts with L-serine. 367 to 370 (EISS) is an ATP binding site. Ser402 lines the L-serine pocket.

It belongs to the class-II aminoacyl-tRNA synthetase family. Type-1 seryl-tRNA synthetase subfamily. Homodimer. The tRNA molecule binds across the dimer.

It localises to the cytoplasm. It catalyses the reaction tRNA(Ser) + L-serine + ATP = L-seryl-tRNA(Ser) + AMP + diphosphate + H(+). It carries out the reaction tRNA(Sec) + L-serine + ATP = L-seryl-tRNA(Sec) + AMP + diphosphate + H(+). It functions in the pathway aminoacyl-tRNA biosynthesis; selenocysteinyl-tRNA(Sec) biosynthesis; L-seryl-tRNA(Sec) from L-serine and tRNA(Sec): step 1/1. Its function is as follows. Catalyzes the attachment of serine to tRNA(Ser). Is also able to aminoacylate tRNA(Sec) with serine, to form the misacylated tRNA L-seryl-tRNA(Sec), which will be further converted into selenocysteinyl-tRNA(Sec). This chain is Serine--tRNA ligase, found in Bradyrhizobium diazoefficiens (strain JCM 10833 / BCRC 13528 / IAM 13628 / NBRC 14792 / USDA 110).